A 242-amino-acid polypeptide reads, in one-letter code: Large ribosomal subunit protein uL1 (242 aa).

The protein belongs to the universal ribosomal protein uL1 family. In terms of assembly, part of the 50S ribosomal subunit.

Binds directly to 23S rRNA. The L1 stalk is quite mobile in the ribosome, and is involved in E site tRNA release. Its function is as follows. Protein L1 is also a translational repressor protein, it controls the translation of the L11 operon by binding to its mRNA. This Dictyoglomus turgidum (strain DSM 6724 / Z-1310) protein is Large ribosomal subunit protein uL1.